A 343-amino-acid chain; its full sequence is Sulfate/thiosulfate import ATP-binding protein CysA (343 aa).

The region spanning 3–233 (ILIENISKTF…PATPFVMGFM (231 aa)) is the ABC transporter domain. 35–42 (GPSGSGKS) contacts ATP.

This sequence belongs to the ABC transporter superfamily. Sulfate/tungstate importer (TC 3.A.1.6) family.

The protein resides in the plastid. It localises to the chloroplast. It catalyses the reaction sulfate(out) + ATP + H2O = sulfate(in) + ADP + phosphate + H(+). The catalysed reaction is thiosulfate(out) + ATP + H2O = thiosulfate(in) + ADP + phosphate + H(+). Its function is as follows. Part of the ABC transporter complex involved in sulfate/thiosulfate import. Responsible for energy coupling to the transport system. The protein is Sulfate/thiosulfate import ATP-binding protein CysA of Nephroselmis olivacea (Green alga).